We begin with the raw amino-acid sequence, 196 residues long: Large ribosomal subunit protein bL20 (196 aa).

The protein belongs to the bacterial ribosomal protein bL20 family.

Its function is as follows. Binds directly to 23S ribosomal RNA and is necessary for the in vitro assembly process of the 50S ribosomal subunit. It is not involved in the protein synthesizing functions of that subunit. The polypeptide is Large ribosomal subunit protein bL20 (rplT) (Oenococcus oeni (strain ATCC BAA-331 / PSU-1)).